The chain runs to 679 residues: UvrABC system protein B (679 aa).

Residues 25 to 412 (EGVNQGQRYQ…DGHLAEQVIR (388 aa)) enclose the Helicase ATP-binding domain. ATP is bound at residue 38–45 (GATGTGKT). The short motif at 91–114 (YYDYYQPEAYVPVSDTYIAKTSSI) is the Beta-hairpin element. A Helicase C-terminal domain is found at 429–591 (QVDDLLAEIR…IVPRPAGKRA (163 aa)). One can recognise a UVR domain in the interval 639–674 (PELIDQLETKMKEAAKNLNFEEAASLRDRIKKFRQK).

The protein belongs to the UvrB family. As to quaternary structure, forms a heterotetramer with UvrA during the search for lesions. Interacts with UvrC in an incision complex.

It is found in the cytoplasm. In terms of biological role, the UvrABC repair system catalyzes the recognition and processing of DNA lesions. A damage recognition complex composed of 2 UvrA and 2 UvrB subunits scans DNA for abnormalities. Upon binding of the UvrA(2)B(2) complex to a putative damaged site, the DNA wraps around one UvrB monomer. DNA wrap is dependent on ATP binding by UvrB and probably causes local melting of the DNA helix, facilitating insertion of UvrB beta-hairpin between the DNA strands. Then UvrB probes one DNA strand for the presence of a lesion. If a lesion is found the UvrA subunits dissociate and the UvrB-DNA preincision complex is formed. This complex is subsequently bound by UvrC and the second UvrB is released. If no lesion is found, the DNA wraps around the other UvrB subunit that will check the other stand for damage. This is UvrABC system protein B from Prochlorococcus marinus (strain MIT 9313).